Here is a 395-residue protein sequence, read N- to C-terminus: Aspergillopepsin-1 (395 aa).

Residues M1–A20 form the signal peptide. Positions V21 to A70 are cleaved as a propeptide — activation peptide. The 307-residue stretch at Y86 to A392 folds into the Peptidase A1 domain. Residues D102 and D284 contribute to the active site. C320 and C355 are disulfide-bonded.

It belongs to the peptidase A1 family. Monomer.

It is found in the secreted. It carries out the reaction Hydrolysis of proteins with broad specificity. Generally favors hydrophobic residues in P1 and P1', but also accepts Lys in P1, which leads to activation of trypsinogen. Does not clot milk.. In terms of biological role, secreted aspartic endopeptidase that allows assimilation of proteinaceous substrates. The scissile peptide bond is attacked by a nucleophilic water molecule activated by two aspartic residues in the active site. Shows a broad primary substrate specificity. Favors hydrophobic residues at the P1 and P1' positions, but also accepts a lysine residue in the P1 position, leading to the activation of trypsinogen and chymotrypsinogen A. The sequence is that of Aspergillopepsin-1 (pepA) from Aspergillus fumigatus (strain CBS 144.89 / FGSC A1163 / CEA10) (Neosartorya fumigata).